Consider the following 188-residue polypeptide: Elongation factor P (188 aa).

The protein belongs to the elongation factor P family.

The protein resides in the cytoplasm. It functions in the pathway protein biosynthesis; polypeptide chain elongation. Involved in peptide bond synthesis. Stimulates efficient translation and peptide-bond synthesis on native or reconstituted 70S ribosomes in vitro. Probably functions indirectly by altering the affinity of the ribosome for aminoacyl-tRNA, thus increasing their reactivity as acceptors for peptidyl transferase. The chain is Elongation factor P from Anaplasma marginale (strain St. Maries).